The following is a 474-amino-acid chain: tRNA-2-methylthio-N(6)-dimethylallyladenosine synthase (474 aa).

The region spanning 3-120 (KKLLIKTWGC…LPEMIKQSQS (118 aa)) is the MTTase N-terminal domain. [4Fe-4S] cluster contacts are provided by C12, C49, C83, C157, C161, and C164. The region spanning 143 to 375 (RAEGATAFVS…QQQINAQAMR (233 aa)) is the Radical SAM core domain. The TRAM domain maps to 378 to 441 (RLMLGTEQRV…ANSLRGEIVR (64 aa)).

This sequence belongs to the methylthiotransferase family. MiaB subfamily. Monomer. [4Fe-4S] cluster is required as a cofactor.

It is found in the cytoplasm. It carries out the reaction N(6)-dimethylallyladenosine(37) in tRNA + (sulfur carrier)-SH + AH2 + 2 S-adenosyl-L-methionine = 2-methylsulfanyl-N(6)-dimethylallyladenosine(37) in tRNA + (sulfur carrier)-H + 5'-deoxyadenosine + L-methionine + A + S-adenosyl-L-homocysteine + 2 H(+). Catalyzes the methylthiolation of N6-(dimethylallyl)adenosine (i(6)A), leading to the formation of 2-methylthio-N6-(dimethylallyl)adenosine (ms(2)i(6)A) at position 37 in tRNAs that read codons beginning with uridine. The sequence is that of tRNA-2-methylthio-N(6)-dimethylallyladenosine synthase from Vibrio vulnificus (strain YJ016).